The following is a 174-amino-acid chain: DNA-directed RNA polymerase IV subunit 7 (174 aa).

It belongs to the eukaryotic RPB7/RPC8 RNA polymerase subunit family. In terms of assembly, component of the RNA polymerase IV complex. Interacts with NRPD1.

It is found in the nucleus. Its function is as follows. DNA-dependent RNA polymerase catalyzes the transcription of DNA into RNA using the four ribonucleoside triphosphates as substrates. Component of RNA polymerase IV which mediates 24-nt short-interfering RNAs (siRNA) accumulation. Implicated in siRNA-directed heterochromatin formation through the action of DCL3 and AGO4, and subsequent DNA methylation-dependent silencing of targeted sequences. Essential component of a self-reinforcing loop coupling de novo DNA methylation to siRNA production. Required for intercellular but not intracellular RNA interference (RNAi) leading to systemic post-transcriptional gene silencing. Involved in the maintenance of post-transcriptional RNA silencing. In Arabidopsis thaliana (Mouse-ear cress), this protein is DNA-directed RNA polymerase IV subunit 7 (NRPD7).